The following is a 721-amino-acid chain: MDAVIAPRHEDCRDAERRAEPLPANAPLSMPVQSLLQSPQAAAVRSPAAWRRALIMVATAVLSAAGIYEMYQVLQVGGITVLEGVVLVLFAALFAWVALSFVSALAGFTVLCCGWRDDVGIMPDGSMPAVSSKIAMLLPTYNEDAPVVFARLQATRQSVDETGRGAQFDWFVLSDSTDPSVWIDEERCYAELAATHDRLYYRHRPYNTARKSGNIADWVERFGGAYDFMVILDADSVMTGDVLVRIAAAMETNSDVGLIQTLPVVVQARTLFARVQQFAGSIYGPMIAAGTAWWHGSESNYWGHNAIIRVSAFAGSAGLPTLAGRKPFGGEILSHDFVEAALMRRGGWRIHLAPTLRGSYEECPPSLLDFAARDRRWCQGNLQHGKLLTARGLHWVSRLHFLTGIGAYLTAPMWLAFLVAGILISLQAQFVRPEYFPKDFSLFPIWPAQDPVRAAWVFAGTMGLLILPKLLALLLVLIRSQTRRRFGGGLRTFGGVLLETMISALTAPVMMVFQSTAVIEILLGRDAGWQVQHRGDGAIPLREVVRRYALPTALGATMAVGAWLVSWPLLLWMTPVIVGLLLAIPVALLTTRVSRSRPLLMTTPEQIDPPAILAQVHALADRLRPANQTTDPLSALCSDRRLRELHLAALAFHPPRRRGRIDPHLATARVLIDDAESYSEAAGWLGPREIRAVLGDRETLQRLLKLSGEHAQLAVGSEPSG.

7 helical membrane passes run 54 to 74 (LIMV…YQVL), 85 to 105 (VVLV…VSAL), 404 to 424 (GIGA…GILI), 458 to 478 (FAGT…LVLI), 493 to 513 (FGGV…MMVF), 548 to 568 (YALP…VSWP), and 569 to 589 (LLLW…VALL).

The protein belongs to the glycosyltransferase 2 family. OpgH subfamily.

It is found in the cell inner membrane. The protein operates within glycan metabolism; osmoregulated periplasmic glucan (OPG) biosynthesis. In terms of biological role, involved in the biosynthesis of osmoregulated periplasmic glucans (OPGs). This is Glucans biosynthesis glucosyltransferase H from Rhodopseudomonas palustris (strain TIE-1).